The sequence spans 144 residues: Large ribosomal subunit protein uL15 (144 aa).

Residues Met-1–Gly-52 are disordered. Gly residues predominate over residues Arg-21–Ser-31.

This sequence belongs to the universal ribosomal protein uL15 family. As to quaternary structure, part of the 50S ribosomal subunit.

Functionally, binds to the 23S rRNA. This Buchnera aphidicola subsp. Acyrthosiphon pisum (strain 5A) protein is Large ribosomal subunit protein uL15.